A 42-amino-acid polypeptide reads, in one-letter code: Large ribosomal subunit protein bL36 (42 aa).

Belongs to the bacterial ribosomal protein bL36 family.

In Wolbachia pipientis subsp. Culex pipiens (strain wPip), this protein is Large ribosomal subunit protein bL36.